We begin with the raw amino-acid sequence, 209 residues long: Molybdenum cofactor guanylyltransferase (209 aa).

Residues leucine 13–glycine 15, lysine 26, asparagine 54, aspartate 74, and aspartate 104 contribute to the GTP site. Position 104 (aspartate 104) interacts with Mg(2+).

Belongs to the MobA family. Monomer. It depends on Mg(2+) as a cofactor.

It is found in the cytoplasm. The enzyme catalyses Mo-molybdopterin + GTP + H(+) = Mo-molybdopterin guanine dinucleotide + diphosphate. In terms of biological role, transfers a GMP moiety from GTP to Mo-molybdopterin (Mo-MPT) cofactor (Moco or molybdenum cofactor) to form Mo-molybdopterin guanine dinucleotide (Mo-MGD) cofactor. The polypeptide is Molybdenum cofactor guanylyltransferase (Acinetobacter baumannii (strain ATCC 17978 / DSM 105126 / CIP 53.77 / LMG 1025 / NCDC KC755 / 5377)).